Consider the following 617-residue polypeptide: Procollagen galactosyltransferase 1 (617 aa).

Residues 1–31 (MAALPRGSRGLPLLPLLLLLPPLGGPRGADG) form the signal peptide. N-linked (GlcNAc...) asparagine glycans are attached at residues asparagine 91, asparagine 179, and asparagine 376. The segment covering 582–601 (DRAKSQKMREQQALSREAKN) has biased composition (basic and acidic residues). The segment at 582-617 (DRAKSQKMREQQALSREAKNSDVLQSPLDSTARDEL) is disordered. The short motif at 614–617 (RDEL) is the Prevents secretion from ER element.

The protein belongs to the glycosyltransferase 25 family. Post-translationally, N-glycosylated.

The protein resides in the endoplasmic reticulum lumen. It carries out the reaction (5R)-5-hydroxy-L-lysyl-[collagen] + UDP-alpha-D-galactose = (5R)-5-O-(beta-D-galactosyl)-5-hydroxy-L-lysyl-[collagen] + UDP + H(+). Functionally, beta-galactosyltransferase that transfers beta-galactose to hydroxylysine residues of type I collagen. By acting on collagen glycosylation, facilitates the formation of collagen triple helix. Also involved in the biosynthesis of collagen type IV. This chain is Procollagen galactosyltransferase 1 (Colgalt1), found in Mus musculus (Mouse).